The primary structure comprises 144 residues: Dynein light chain Tctex-type protein 2B (144 aa).

It belongs to the dynein light chain Tctex-type family. Light chain of the cytoplasmic dynein complex 2, a multisubunit complex composed at least of eleven different proteins. The cytoplasmic dynein 2 complex consists of two catalytic heavy chains (HCs) and a number of non-catalytic subunits presented by intermediate chains (ICs), light intermediate chains (LICs) and light chains (LCs). Among them, a heavy chain (DYNC2H1), two intermediate chains (DYNC2I2 and DYNC2I1), a light intermediate chain (DYNC2LI1), and a light chain (DYNLT2B) are unique to the dynein-2 complex, but a subset of the light chains are also shared by dynein-1 and dynein-2 complexes. The dimer DYNLT2B-DYNLT1/DYNLT3 interacts with DYNC2I1; this interaction is crucial for retrograde trafficking of ciliary proteins.

The protein localises to the dynein axonemal particle. In terms of biological role, acts as one of several non-catalytic accessory components of the cytoplasmic dynein 2 complex (dynein-2 complex), a motor protein complex that drives the movement of cargos along microtubules within cilia and flagella in concert with the intraflagellar transport (IFT) system. Required for proper retrograde ciliary transport. The polypeptide is Dynein light chain Tctex-type protein 2B (Dynlt2b) (Mus musculus (Mouse)).